The following is a 703-amino-acid chain: Collagen alpha-2(VIII) chain (703 aa).

The signal sequence occupies residues 1 to 28 (MLGTLTPLSSLLLLLLVLVLGCGPRASS). A nonhelical region (NC2) region spans residues 29 to 76 (GGGAGGAAGYAPVKYIQPMQKGPVGPPFREGKGQYLEMPLPLLPMDLK). Positions 70–544 (LLPMDLKGEP…AFDETGIAGL (475 aa)) are disordered. The triple-helical region stretch occupies residues 77 to 536 (GEPGPPGKPG…PGPPGAPGAF (460 aa)). Positions 79–97 (PGPPGKPGPRGPPGPPGFP) are enriched in pro residues. Residues 166 to 192 (PSGITIPGKPGAQGVPGPPGFQGEPGP) show a composition bias toward low complexity. Positions 206–224 (GDNGVGQPGLPGAPGQGGA) are enriched in gly residues. 2 stretches are compositionally biased toward low complexity: residues 265–275 (EPGAVGPKGPP) and 285–297 (AAGLPGPQGPSGA). A compositionally biased stretch (gly residues) spans 433-442 (GRPGGPGVAG). Composition is skewed to low complexity over residues 444-462 (LGQKGDLGLPGQPGLRGPS) and 476-486 (PQGLPGLKGEP). Pro residues predominate over residues 506–532 (TGPPGVPGSPGITGPPGPPGPPGPPGA). Residues 537–703 (DETGIAGLHL…SFSGFLLCPT (167 aa)) form a nonhelical region (NC1) region. The region spanning 570–703 (SAHATPAFTA…SFSGFLLCPT (134 aa)) is the C1q domain.

As to quaternary structure, homotrimers, or heterotrimers in association with alpha 2(VIII) type collagens. Four homotrimers can form a tetrahedron stabilized by central interacting C-terminal NC1 trimers. In terms of processing, proteolytically cleaved by neutrophil elastase, in vitro. Post-translationally, prolines at the third position of the tripeptide repeating unit (G-X-Y) are hydroxylated in some or all of the chains. In terms of tissue distribution, expressed primarily in the subendothelium of large blood vessels. Also expressed in arterioles and venules in muscle, heart, kidney, spleen, umbilical cord, liver and lung and is also found in connective tissue layers around hair follicles, around nerve bundles in muscle, in the dura of the optic nerve, in cornea and sclera, and in the perichondrium of cartilaginous tissues. In the kidney, expressed in mesangial cells, glomerular endothelial cells, and tubular epithelial cells. Also expressed in mast cells, and in astrocytes during the repair process. Expressed in Descemet's membrane.

The protein localises to the secreted. The protein resides in the extracellular space. It localises to the extracellular matrix. Its subcellular location is the basement membrane. Macromolecular component of the subendothelium. Major component of the Descemet's membrane (basement membrane) of corneal endothelial cells. Also a component of the endothelia of blood vessels. Necessary for migration and proliferation of vascular smooth muscle cells and thus, has a potential role in the maintenance of vessel wall integrity and structure, in particular in atherogenesis. In Homo sapiens (Human), this protein is Collagen alpha-2(VIII) chain (COL8A2).